We begin with the raw amino-acid sequence, 767 residues long: V-set and immunoglobulin domain-containing protein 10-like 2 (767 aa).

An N-terminal signal peptide occupies residues 1 to 28; sequence MVGQRAQHSPVSLLLLIHLCLLHLRASG. 3 consecutive Ig-like domains span residues 34 to 140, 150 to 234, and 242 to 324; these read PEAP…SHLT, PQVR…AFLD, and PVIT…TTVQ. 3 disulfide bridges follow: Cys56–Cys122, Cys169–Cys217, and Cys268–Cys308. Asn376 carries an N-linked (GlcNAc...) asparagine glycan. 2 Ig-like domains span residues 399–499 and 501–593; these read PALA…LQLE and PQLD…VLLE. 2 disulfide bridges follow: Cys435–Cys481 and Cys522–Cys577. Positions 599–699 constitute a Fibronectin type-III domain; that stretch reads APPNVTISRL…EVKIPADPPF (101 aa). N-linked (GlcNAc...) asparagine glycosylation is found at Asn602 and Asn628. A helical membrane pass occupies residues 704-724; it reads AVLGAAGTGMVVATVASLLVF. The tract at residues 735-754 is disordered; it reads PRLETPTTTPGLDPAQETTD. The span at 739–754 shows a compositional bias: polar residues; the sequence is TPTTTPGLDPAQETTD.

It is found in the membrane. The sequence is that of V-set and immunoglobulin domain-containing protein 10-like 2 from Homo sapiens (Human).